The sequence spans 398 residues: Nuclear egress protein 2 (398 aa).

The Perinuclear space portion of the chain corresponds to 1–359 (MEMNKVLHQD…GPSRPQSGPW (359 aa)). Disordered stretches follow at residues 202-246 (ALTR…PPPP) and 306-334 (LEEH…SLER). Pro residues predominate over residues 215–224 (ASPPPPPPRH). Serine 216 is subject to Phosphoserine. Positions 225 to 240 (PSCSPTMVAAGGAAAG) are enriched in low complexity. The segment covering 311-323 (SRRRGVSTHHRHP) has biased composition (basic residues). A helical transmembrane segment spans residues 360–382 (LPARFATLGPLVLALLLVLALLW). The Nuclear segment spans residues 383-398 (RGHGQSSSPTRSAHRD).

It belongs to the herpesviridae NEC2 protein family. In terms of assembly, forms a heterohexameric complex with NEC1. Interacts with host UBA7 and RNF170; this interaction promotes UBA7 proteasomal degradation. Post-translationally, phosphorylated. Phosphorylation by viral kinase UL97 at Ser-216 plays an important role for correct viral nuclear egress complex (NEC) localization.

Its subcellular location is the host nucleus inner membrane. Its function is as follows. Plays an essential role in virion nuclear egress, the first step of virion release from infected cell. Within the host nucleus, NEC1 interacts with the newly formed capsid through the vertexes and directs it to the inner nuclear membrane by associating with NEC2. Induces the budding of the capsid at the inner nuclear membrane as well as its envelopment into the perinuclear space. There, the NEC1/NEC2 complex promotes the fusion of the enveloped capsid with the outer nuclear membrane and the subsequent release of the viral capsid into the cytoplasm where it will reach the secondary budding sites in the host Golgi or trans-Golgi network. Inhibits host ISGylation and subsequent innate antiviral response by targeting host UBA7 for proteasomal degradation. The sequence is that of Nuclear egress protein 2 from Homo sapiens (Human).